We begin with the raw amino-acid sequence, 349 residues long: DNA polymerase IV (349 aa).

The UmuC domain maps to 4 to 185 (IIHIDCDCFY…LPVAKLHGVG (182 aa)). Mg(2+) is bound by residues aspartate 8 and aspartate 103. Residue glutamate 104 is part of the active site.

The protein belongs to the DNA polymerase type-Y family. As to quaternary structure, monomer. Mg(2+) is required as a cofactor.

It localises to the cytoplasm. The enzyme catalyses DNA(n) + a 2'-deoxyribonucleoside 5'-triphosphate = DNA(n+1) + diphosphate. Functionally, poorly processive, error-prone DNA polymerase involved in untargeted mutagenesis. Copies undamaged DNA at stalled replication forks, which arise in vivo from mismatched or misaligned primer ends. These misaligned primers can be extended by PolIV. Exhibits no 3'-5' exonuclease (proofreading) activity. May be involved in translesional synthesis, in conjunction with the beta clamp from PolIII. The protein is DNA polymerase IV of Pseudomonas paraeruginosa (strain DSM 24068 / PA7) (Pseudomonas aeruginosa (strain PA7)).